The following is a 79-amino-acid chain: Exodeoxyribonuclease 7 small subunit (79 aa).

Belongs to the XseB family. In terms of assembly, heterooligomer composed of large and small subunits.

The protein localises to the cytoplasm. The catalysed reaction is Exonucleolytic cleavage in either 5'- to 3'- or 3'- to 5'-direction to yield nucleoside 5'-phosphates.. Bidirectionally degrades single-stranded DNA into large acid-insoluble oligonucleotides, which are then degraded further into small acid-soluble oligonucleotides. The polypeptide is Exodeoxyribonuclease 7 small subunit (Lactococcus lactis subsp. lactis (strain IL1403) (Streptococcus lactis)).